A 130-amino-acid chain; its full sequence is Putative F-box protein At1g77880 (130 aa).

The 47-residue stretch at 18–64 folds into the F-box domain; that stretch reads KVSIPYLPDDLLLNCLARISRLYYPTLSLVSKRFRSLLASTELYETR.

This is Putative F-box protein At1g77880 from Arabidopsis thaliana (Mouse-ear cress).